We begin with the raw amino-acid sequence, 250 residues long: GILT-like protein 1 (250 aa).

The signal sequence occupies residues 1–21; the sequence is MSHKIAAVCLLMSCLIATAYS. N-linked (GlcNAc...) asparagine glycosylation occurs at N157.

The protein belongs to the GILT family. In terms of processing, conjugated to URM1, a ubiquitin-like protein.

The protein resides in the secreted. Its function is as follows. Involved in the immune response to bacterial infection. In Drosophila melanogaster (Fruit fly), this protein is GILT-like protein 1.